Reading from the N-terminus, the 698-residue chain is Interleukin enhancer-binding factor 3 (698 aa).

Residues 5-379 enclose the DZF domain; the sequence is RIFLNDDRHV…ALKRPMEEDG (375 aa). 3 disordered regions span residues 51 to 88, 374 to 403, and 473 to 522; these read QQEKDCSGEQEQPEPEEPETTEEGKDSEGKTGENPTRT, PMEEDGEDKSPSKKKKKIQKKDEKSEPPQA, and EEKE…KHGK. The segment covering 61 to 71 has biased composition (acidic residues); the sequence is EQPEPEEPETT. 2 stretches are compositionally biased toward basic and acidic residues: residues 72–81 and 374–384; these read EEGKDSEGKT and PMEEDGEDKSP. A Bipartite nuclear localization signal motif is present at residues 372–390; it reads KRPMEEDGEDKSPSKKKKK. In terms of domain architecture, DRBM 1 spans 399–468; that stretch reads EPPQAMNALM…AVKVLQDMGL (70 aa). Positions 490 to 503 are enriched in polar residues; that stretch reads TPAQPADSTQTDSA. The region spanning 520-586 is the DRBM 2 domain; sequence HGKNPVMELN…ALAALEKLFP (67 aa).

A component of a ybx2/frgy2-containing mRNA-ribonucleoprotein (mRNP) complex. Also a component of the CCAAT box transcription factor (CBTF) complex. In terms of processing, phosphorylated. Phosphorylation affects nuclear translocation. Post-translationally, methylated by protein arginine N-methyltransferase 1 (prmt1b) in the RGG-rich domain. Methylation decreases DNA-binding and thereby decreases transcription of the gata2 gene, but does not regulate dsRNA binding or subcellular localization.

It localises to the nucleus. Its subcellular location is the cytoplasm. RNA-binding protein that plays an essential role in the biogenesis of circular RNAs (circRNAs) which are produced by back-splicing circularization of pre-mRNAs. Within the nucleus, promotes circRNAs processing by stabilizing the regulatory elements residing in the flanking introns of the circularized exons. Plays thereby a role in the back-splicing of a subset of circRNAs. As a consequence, participates in a wide range of transcriptional and post-transcriptional processes. Binds to poly-U elements and AU-rich elements (AREs) in the 3'-UTR of target mRNAs. Upon viral infection, ILF3 accumulates in the cytoplasm and participates in the innate antiviral response. Mechanistically, ILF3 becomes phosphorylated and activated by the double-stranded RNA-activated protein kinase/PKR which releases ILF3 from cellular mature circRNAs. In turn, unbound ILF3 molecules are able to interact with and thus inhibit viral mRNAs. Has a cytoplasmic role early in development as part of a ribonucleoprotein (mRNP) complex which may regulate mRNA transport and/or translation. Following nuclear localization at the mid-blastula transition, acts as a transcription factor and binds the 5'-CCAAT-3' promoter sequence to regulate transcription of the gata2 gene as a subunit of the CCAAT box transcription factor (CBTF). Its role as an mRNP component negatively regulates its activity as a transcription factor by precluding its nuclear localization. This Xenopus tropicalis (Western clawed frog) protein is Interleukin enhancer-binding factor 3.